The chain runs to 145 residues: Transcription antitermination protein NusB (145 aa).

It belongs to the NusB family.

Functionally, involved in transcription antitermination. Required for transcription of ribosomal RNA (rRNA) genes. Binds specifically to the boxA antiterminator sequence of the ribosomal RNA (rrn) operons. The protein is Transcription antitermination protein NusB of Acetivibrio thermocellus (strain ATCC 27405 / DSM 1237 / JCM 9322 / NBRC 103400 / NCIMB 10682 / NRRL B-4536 / VPI 7372) (Clostridium thermocellum).